The primary structure comprises 91 residues: Acylphosphatase (91 aa).

The region spanning 5 to 91 (RAHLRIYGRV…EGLEGFKVVG (87 aa)) is the Acylphosphatase-like domain. Residues Arg20 and Asn38 contribute to the active site.

Belongs to the acylphosphatase family.

It carries out the reaction an acyl phosphate + H2O = a carboxylate + phosphate + H(+). The chain is Acylphosphatase (acyP) from Thermococcus kodakarensis (strain ATCC BAA-918 / JCM 12380 / KOD1) (Pyrococcus kodakaraensis (strain KOD1)).